We begin with the raw amino-acid sequence, 302 residues long: MKKDLLSIYDLEAGDFKAIFEKARHLKSVHEQGVAYTPLKGKTLGMIFDKSSTRTRISFEVGMYQLGGLALFLSNRDTQLGRGETVADSARIMSRYLNGIMIRTFSHLIIEEFAAHATIPVINGLTDLLHPCQILSDLFTIIEKKGSYERLKIVYVGDGNNIANSWINAAARLPFHLALSCPEGYDPDSGILDRGVKEAKEGVSLMRDPYEAVRNADVVYTDVWASMGQEAEQEARARVFRPYQINEALLSPAKKDAIVMHCLPAHRGEEITAAVLDGPRSVIIDQAENRLHVQKAILEILI.

Residues 52–55 (STRT), Gln-79, Arg-103, and 130–133 (HPCQ) contribute to the carbamoyl phosphate site. Residues Asn-161, Asp-222, and 226 to 227 (SM) each bind L-ornithine. Residues 262 to 263 (CL) and Arg-290 contribute to the carbamoyl phosphate site.

This sequence belongs to the aspartate/ornithine carbamoyltransferase superfamily. OTCase family.

The protein localises to the cytoplasm. The catalysed reaction is carbamoyl phosphate + L-ornithine = L-citrulline + phosphate + H(+). Its pathway is amino-acid biosynthesis; L-arginine biosynthesis; L-arginine from L-ornithine and carbamoyl phosphate: step 1/3. Functionally, reversibly catalyzes the transfer of the carbamoyl group from carbamoyl phosphate (CP) to the N(epsilon) atom of ornithine (ORN) to produce L-citrulline. The sequence is that of Ornithine carbamoyltransferase from Syntrophus aciditrophicus (strain SB).